The chain runs to 418 residues: Tyrosine--tRNA ligase (418 aa).

Y34 provides a ligand contact to L-tyrosine. Residues 39–48 (PTADSLHLGH) carry the 'HIGH' region motif. Y169 and Q173 together coordinate L-tyrosine. A 'KMSKS' region motif is present at residues 229–233 (KFGKS). K232 is a binding site for ATP. One can recognise an S4 RNA-binding domain in the interval 352–418 (LNLVDMLVTA…GKKKYAVLTY (67 aa)).

It belongs to the class-I aminoacyl-tRNA synthetase family. TyrS type 1 subfamily. Homodimer.

The protein localises to the cytoplasm. It catalyses the reaction tRNA(Tyr) + L-tyrosine + ATP = L-tyrosyl-tRNA(Tyr) + AMP + diphosphate + H(+). In terms of biological role, catalyzes the attachment of tyrosine to tRNA(Tyr) in a two-step reaction: tyrosine is first activated by ATP to form Tyr-AMP and then transferred to the acceptor end of tRNA(Tyr). This Streptococcus pyogenes serotype M28 (strain MGAS6180) protein is Tyrosine--tRNA ligase.